The following is a 672-amino-acid chain: uncharacterized protein (672 aa).

Residues 1–10 (MAKSDGDDPL) show a composition bias toward basic and acidic residues. Residues 1–41 (MAKSDGDDPLRPASPRLRSSRRHSLRYSAYTGGPDPLAPPV) form a disordered region.

This is an uncharacterized protein from Mycobacterium bovis (strain ATCC BAA-935 / AF2122/97).